A 1053-amino-acid chain; its full sequence is Translation initiation factor IF-2 (1053 aa).

The segment covering 1–20 (MSESKNSGENTLSVTPTKTL) has biased composition (polar residues). Positions 1–442 (MSESKNSGEN…TATGGEEEER (442 aa)) are disordered. Low complexity-rich tracts occupy residues 64 to 76 (EAAPTPAPAATVT) and 83 to 102 (RPAAPNPTAAPTTPPAAAVP). 2 stretches are compositionally biased toward pro residues: residues 131–141 (PAQPKAEPVPA) and 150–161 (APVPPVPAPSAP). Over residues 178–220 (PVSQAKPIQTAPVQTAPAAQASASQTTGPRPVAAGPRPATGAA) the composition is skewed to low complexity. Residues 255 to 264 (GGRGGPGRGE) show a composition bias toward gly residues. Basic and acidic residues-rich tracts occupy residues 279 to 288 (LTDEEREARA) and 295 to 353 (RIRE…EAKR). The span at 375–386 (TATAAAPAAAAP) shows a compositional bias: low complexity. One can recognise a tr-type G domain in the interval 550-720 (PRPPVVTIMG…ALQAELLDLK (171 aa)). The G1 stretch occupies residues 559–566 (GHVDHGKT). Position 559–566 (559–566 (GHVDHGKT)) interacts with GTP. Residues 584-588 (GITQH) form a G2 region. Residues 606 to 609 (DTPG) are G3. GTP contacts are provided by residues 606 to 610 (DTPGH) and 660 to 663 (NKID). The interval 660 to 663 (NKID) is G4. The tract at residues 696 to 698 (SAT) is G5.

The protein belongs to the TRAFAC class translation factor GTPase superfamily. Classic translation factor GTPase family. IF-2 subfamily.

The protein localises to the cytoplasm. Functionally, one of the essential components for the initiation of protein synthesis. Protects formylmethionyl-tRNA from spontaneous hydrolysis and promotes its binding to the 30S ribosomal subunits. Also involved in the hydrolysis of GTP during the formation of the 70S ribosomal complex. The chain is Translation initiation factor IF-2 from Beijerinckia indica subsp. indica (strain ATCC 9039 / DSM 1715 / NCIMB 8712).